The primary structure comprises 301 residues: ATP synthase gamma chain (301 aa).

Belongs to the ATPase gamma chain family. F-type ATPases have 2 components, CF(1) - the catalytic core - and CF(0) - the membrane proton channel. CF(1) has five subunits: alpha(3), beta(3), gamma(1), delta(1), epsilon(1). CF(0) has three main subunits: a, b and c.

It is found in the cell inner membrane. In terms of biological role, produces ATP from ADP in the presence of a proton gradient across the membrane. The gamma chain is believed to be important in regulating ATPase activity and the flow of protons through the CF(0) complex. In Bordetella avium (strain 197N), this protein is ATP synthase gamma chain.